We begin with the raw amino-acid sequence, 232 residues long: Modulator of macroautophagy TMEM150B (232 aa).

Topologically, residues Met1–Leu6 are cytoplasmic. The chain crosses the membrane as a helical span at residues Leu7–Val27. At Ser28–Gln50 the chain is on the extracellular side. Residues Asn29 and Asn33 are each glycosylated (N-linked (GlcNAc...) asparagine). A helical transmembrane segment spans residues Ser51–Ile71. Residues Arg72–Ser83 lie on the Cytoplasmic side of the membrane. Residues His84–Gly104 traverse the membrane as a helical segment. Over Asn105 to His115 the chain is Extracellular. The chain crosses the membrane as a helical span at residues Leu116–Ile136. Residues Thr137–Arg153 lie on the Cytoplasmic side of the membrane. Residues Phe154–Gly174 traverse the membrane as a helical segment. At Phe175–Ser177 the chain is on the extracellular side. The chain crosses the membrane as a helical span at residues Ala178 to Ala198. Residues Ala199–Gln232 are Cytoplasmic-facing.

This sequence belongs to the DRAM/TMEM150 family.

Its subcellular location is the cell membrane. It localises to the endosome membrane. The protein localises to the cytoplasmic vesicle. It is found in the autophagosome membrane. In terms of biological role, modulator of macroautophagy that causes accumulation of autophagosomes under basal conditions and enhances autophagic flux. Represses cell death and promotes long-term clonogenic survival of cells grown in the absence of glucose in a macroautophagy-independent manner. May have some role in extracellular matrix engulfment or growth factor receptor recycling, both of which can modulate cell survival. The protein is Modulator of macroautophagy TMEM150B of Danio rerio (Zebrafish).